The primary structure comprises 407 residues: Imidazolonepropionase (407 aa).

Histidine 74 and histidine 76 together coordinate Fe(3+). Residues histidine 74 and histidine 76 each contribute to the Zn(2+) site. 4-imidazolone-5-propanoate is bound by residues arginine 83, tyrosine 146, and histidine 179. Residue tyrosine 146 coordinates N-formimidoyl-L-glutamate. A Fe(3+)-binding site is contributed by histidine 244. Zn(2+) is bound at residue histidine 244. Position 247 (glutamine 247) interacts with 4-imidazolone-5-propanoate. Residue aspartate 319 participates in Fe(3+) binding. Aspartate 319 serves as a coordination point for Zn(2+). Residues asparagine 321 and glycine 323 each coordinate N-formimidoyl-L-glutamate. Threonine 324 provides a ligand contact to 4-imidazolone-5-propanoate.

Belongs to the metallo-dependent hydrolases superfamily. HutI family. Zn(2+) serves as cofactor. It depends on Fe(3+) as a cofactor.

It is found in the cytoplasm. It carries out the reaction 4-imidazolone-5-propanoate + H2O = N-formimidoyl-L-glutamate. Its pathway is amino-acid degradation; L-histidine degradation into L-glutamate; N-formimidoyl-L-glutamate from L-histidine: step 3/3. In terms of biological role, catalyzes the hydrolytic cleavage of the carbon-nitrogen bond in imidazolone-5-propanoate to yield N-formimidoyl-L-glutamate. It is the third step in the universal histidine degradation pathway. This Salmonella schwarzengrund (strain CVM19633) protein is Imidazolonepropionase.